A 204-amino-acid polypeptide reads, in one-letter code: Large ribosomal subunit protein eL15 (204 aa).

The interval 185–204 is disordered; it reads GGSRRAAWKRKNREHMHRKR. Residues 190-204 show a composition bias toward basic residues; sequence AAWKRKNREHMHRKR.

Belongs to the eukaryotic ribosomal protein eL15 family.

The sequence is that of Large ribosomal subunit protein eL15 (RpL15) from Drosophila melanogaster (Fruit fly).